We begin with the raw amino-acid sequence, 489 residues long: Endothelial zinc finger protein induced by tumor necrosis factor alpha (489 aa).

Residues 1-15 (MKELDPKNDISEDKL) are compositionally biased toward basic and acidic residues. Disordered regions lie at residues 1-61 (MKEL…PLGI) and 98-122 (EKGA…KPPM). 13 consecutive C2H2-type zinc fingers follow at residues 130–152 (YDCS…QRIH), 158–180 (FECD…QRVH), 186–208 (YACG…QRTH), 214–236 (YVCD…ERIH), 242–264 (YACG…QRTH), 270–292 (YVCP…QRTH), 298–320 (YACK…QRNH), 326–348 (YVCG…QRFH), 354–376 (FECS…QRIH), 382–404 (YECY…QIVH), 410–432 (YVCG…QRIH), 438–460 (YRCG…QRIH), and 466–488 (YRCG…LRIH).

Belongs to the krueppel C2H2-type zinc-finger protein family. In terms of tissue distribution, highly expressed in placenta, followed by brain, testis, pancreas, heart, small intestine, muscle, uterus, prostate and peripheral blood leukocytes. Not detected in liver, lung, colon, stomach, salivary and thyroid gland.

It localises to the nucleus. In terms of biological role, may be involved in transcriptional regulation. This Homo sapiens (Human) protein is Endothelial zinc finger protein induced by tumor necrosis factor alpha (ZNF71).